A 530-amino-acid chain; its full sequence is Cation transporter HKT2;2 (530 aa).

The Cytoplasmic segment spans residues 1–40; the sequence is MTSIYQEFIHTKCQSFRSIGRYVLHSIVLIYRFVSLHVHP. A run of 2 helical transmembrane segments spans residues 41-61 and 102-122; these read FWIQLSYFLLISILGSVLLMF and IVVLTLLMLVGGEVFVSFLGL. Residues 123–186 are Cytoplasmic-facing; that stretch reads MLRLKHKHNP…DLKRSKRLRW (64 aa). The next 2 helical transmembrane spans lie at 187–207 and 260–280; these read FLGFVVFSYFVVIHVVGFLLV and GLLLLFIGQILAGNTLYPLFL. The Cytoplasmic portion of the chain corresponds to 281–317; the sequence is RILIWFLGKVTKLKDLKLMIKNSDELQYDYLLPKLPT. 2 helical membrane passes run 318–338 and 372–392; these read AFLASTVIGLMASLVTLFGSV and IDCSLIAPAVLVLFIILMYLP. Residues 393 to 420 are Cytoplasmic-facing; it reads PSTTFALSNGDEKTANKKAKRKLGLVVR. The next 2 helical transmembrane spans lie at 421–441 and 494–514; these read NLAFSQLACNAVFVIVALITE and SLSGWWSDEGKLLLVSVMLYG. At 515-530 the chain is on the cytoplasmic side; that stretch reads RLKAFTKGTGEYWRLW.

This sequence belongs to the TrkH potassium transport family. HKT (TC 2.A.38.3) subfamily.

The protein resides in the membrane. Its function is as follows. Seems to be involved in regulation of potassium-sodium homeostasis. Seems to act as a potassium-sodium cotransporter, which mediates increased potassium uptake under external sodium accumulation and contributes to salt-tolerance in cultivar indica Pokkali. The protein is Cation transporter HKT2;2 of Oryza sativa subsp. indica (Rice).